The sequence spans 471 residues: Ribulose bisphosphate carboxylase large chain (471 aa).

The substrate site is built by asparagine 119 and threonine 169. Catalysis depends on lysine 171, which acts as the Proton acceptor. A substrate-binding site is contributed by lysine 173. Residues lysine 197, aspartate 199, and glutamate 200 each contribute to the Mg(2+) site. Lysine 197 carries the post-translational modification N6-carboxylysine. Histidine 290 serves as the catalytic Proton acceptor. Positions 291, 323, and 375 each coordinate substrate.

It belongs to the RuBisCO large chain family. Type I subfamily. In terms of assembly, heterohexadecamer of 8 large chains and 8 small chains; disulfide-linked. The disulfide link is formed within the large subunit homodimers. Requires Mg(2+) as cofactor. Post-translationally, the disulfide bond which can form in the large chain dimeric partners within the hexadecamer appears to be associated with oxidative stress and protein turnover.

The protein localises to the carboxysome. The enzyme catalyses 2 (2R)-3-phosphoglycerate + 2 H(+) = D-ribulose 1,5-bisphosphate + CO2 + H2O. The catalysed reaction is D-ribulose 1,5-bisphosphate + O2 = 2-phosphoglycolate + (2R)-3-phosphoglycerate + 2 H(+). RuBisCO catalyzes two reactions: the carboxylation of D-ribulose 1,5-bisphosphate, the primary event in carbon dioxide fixation, as well as the oxidative fragmentation of the pentose substrate in the photorespiration process. Both reactions occur simultaneously and in competition at the same active site. This Crocosphaera subtropica (strain ATCC 51142 / BH68) (Cyanothece sp. (strain ATCC 51142)) protein is Ribulose bisphosphate carboxylase large chain.